The sequence spans 419 residues: GTPase Obg (419 aa).

Residues 1 to 156 enclose the Obg domain; sequence MFIDKVNTYL…AEVNLELRLI (156 aa). The OBG-type G domain maps to 157–325; it reads ADVGLLGLPN…LLKEMLRMLE (169 aa). GTP is bound by residues 163–170, 188–192, 209–212, 279–282, and 306–308; these read GLPNAGKS, FTTLA, DIPG, NKID, and SAA. Residues S170 and T190 each contribute to the Mg(2+) site. The region spanning 342-419 is the OCT domain; sequence KKYIYEPEFK…IGDFEFTFEK (78 aa).

The protein belongs to the TRAFAC class OBG-HflX-like GTPase superfamily. OBG GTPase family. As to quaternary structure, monomer. Mg(2+) is required as a cofactor.

Its subcellular location is the cytoplasm. In terms of biological role, an essential GTPase which binds GTP, GDP and possibly (p)ppGpp with moderate affinity, with high nucleotide exchange rates and a fairly low GTP hydrolysis rate. Plays a role in control of the cell cycle, stress response, ribosome biogenesis and in those bacteria that undergo differentiation, in morphogenesis control. The sequence is that of GTPase Obg from Endomicrobium trichonymphae.